A 373-amino-acid chain; its full sequence is Chaperone protein DnaJ (373 aa).

Positions aspartate 5–glycine 70 constitute a J domain. A CR-type zinc finger spans residues glycine 132–threonine 214. 8 residues coordinate Zn(2+): cysteine 145, cysteine 148, cysteine 162, cysteine 165, cysteine 188, cysteine 191, cysteine 202, and cysteine 205. 4 CXXCXGXG motif repeats span residues cysteine 145–glycine 152, cysteine 162–glycine 169, cysteine 188–glycine 195, and cysteine 202–glycine 209.

This sequence belongs to the DnaJ family. In terms of assembly, homodimer. The cofactor is Zn(2+).

It is found in the cytoplasm. Participates actively in the response to hyperosmotic and heat shock by preventing the aggregation of stress-denatured proteins and by disaggregating proteins, also in an autonomous, DnaK-independent fashion. Unfolded proteins bind initially to DnaJ; upon interaction with the DnaJ-bound protein, DnaK hydrolyzes its bound ATP, resulting in the formation of a stable complex. GrpE releases ADP from DnaK; ATP binding to DnaK triggers the release of the substrate protein, thus completing the reaction cycle. Several rounds of ATP-dependent interactions between DnaJ, DnaK and GrpE are required for fully efficient folding. Also involved, together with DnaK and GrpE, in the DNA replication of plasmids through activation of initiation proteins. The polypeptide is Chaperone protein DnaJ (Clostridium botulinum (strain Eklund 17B / Type B)).